The primary structure comprises 235 residues: Glycerol-3-phosphate acyltransferase (235 aa).

6 helical membrane passes run 4–24 (LIAI…IMAG), 56–76 (AVTL…VAFF), 94–114 (LLAG…GFKG), 122–142 (AGML…IFLL), 152–172 (VASI…KYIF), and 191–211 (FHDS…LAIL).

It belongs to the PlsY family. In terms of assembly, probably interacts with PlsX.

It localises to the cell inner membrane. The enzyme catalyses an acyl phosphate + sn-glycerol 3-phosphate = a 1-acyl-sn-glycero-3-phosphate + phosphate. The protein operates within lipid metabolism; phospholipid metabolism. Functionally, catalyzes the transfer of an acyl group from acyl-phosphate (acyl-PO(4)) to glycerol-3-phosphate (G3P) to form lysophosphatidic acid (LPA). This enzyme utilizes acyl-phosphate as fatty acyl donor, but not acyl-CoA or acyl-ACP. This is Glycerol-3-phosphate acyltransferase from Chlorobium phaeobacteroides (strain DSM 266 / SMG 266 / 2430).